Here is a 194-residue protein sequence, read N- to C-terminus: Protein GrpE (194 aa).

Basic and acidic residues predominate over residues 1-12 (MNKQKNNRERTP). A disordered region spans residues 1–44 (MNKQKNNRERTPQPEQDTERDEQLTNSHENDIDSAPAAEENDKV).

This sequence belongs to the GrpE family. Homodimer.

It is found in the cytoplasm. In terms of biological role, participates actively in the response to hyperosmotic and heat shock by preventing the aggregation of stress-denatured proteins, in association with DnaK and GrpE. It is the nucleotide exchange factor for DnaK and may function as a thermosensor. Unfolded proteins bind initially to DnaJ; upon interaction with the DnaJ-bound protein, DnaK hydrolyzes its bound ATP, resulting in the formation of a stable complex. GrpE releases ADP from DnaK; ATP binding to DnaK triggers the release of the substrate protein, thus completing the reaction cycle. Several rounds of ATP-dependent interactions between DnaJ, DnaK and GrpE are required for fully efficient folding. The protein is Protein GrpE of Porphyromonas gingivalis (strain ATCC 33277 / DSM 20709 / CIP 103683 / JCM 12257 / NCTC 11834 / 2561).